Here is a 344-residue protein sequence, read N- to C-terminus: Arginine N-succinyltransferase (344 aa).

Leu-125 contributes to the succinyl-CoA binding site. His-229 functions as the Proton donor in the catalytic mechanism.

It belongs to the arginine N-succinyltransferase family.

It carries out the reaction succinyl-CoA + L-arginine = N(2)-succinyl-L-arginine + CoA + H(+). Its pathway is amino-acid degradation; L-arginine degradation via AST pathway; L-glutamate and succinate from L-arginine: step 1/5. Catalyzes the transfer of succinyl-CoA to arginine to produce N(2)-succinylarginine. The protein is Arginine N-succinyltransferase of Shigella flexneri.